The sequence spans 311 residues: Replication initiation protein (311 aa).

This sequence belongs to the plasmid replication initiation factor family.

Functionally, this protein is probably a specific topoisomerase involved in initiating replication. This protein is specifically required and may be rate-limiting for replication of the plasmid in vivo. This is Replication initiation protein (repD) from Staphylococcus aureus.